We begin with the raw amino-acid sequence, 702 residues long: Elongation factor G (702 aa).

The region spanning 8 to 196 is the tr-type G domain; sequence ERYRNIGISA…MKAIIWDEAS (189 aa). GTP-binding positions include 17 to 24, 88 to 92, and 142 to 145; these read AHIDAGKT, DTPGH, and NKMD.

It belongs to the TRAFAC class translation factor GTPase superfamily. Classic translation factor GTPase family. EF-G/EF-2 subfamily.

The protein localises to the cytoplasm. Catalyzes the GTP-dependent ribosomal translocation step during translation elongation. During this step, the ribosome changes from the pre-translocational (PRE) to the post-translocational (POST) state as the newly formed A-site-bound peptidyl-tRNA and P-site-bound deacylated tRNA move to the P and E sites, respectively. Catalyzes the coordinated movement of the two tRNA molecules, the mRNA and conformational changes in the ribosome. The polypeptide is Elongation factor G (fusA) (Thiomonas delicata (Thiomonas cuprina)).